The chain runs to 359 residues: 3-dehydroquinate synthase (359 aa).

Residues 71–76 (DGEQHK), 105–109 (GVIGD), 129–130 (TT), lysine 142, and lysine 151 contribute to the NAD(+) site. Residues glutamate 184, histidine 247, and histidine 264 each coordinate Zn(2+).

Belongs to the sugar phosphate cyclases superfamily. Dehydroquinate synthase family. NAD(+) is required as a cofactor. It depends on Co(2+) as a cofactor. Requires Zn(2+) as cofactor.

The protein resides in the cytoplasm. It catalyses the reaction 7-phospho-2-dehydro-3-deoxy-D-arabino-heptonate = 3-dehydroquinate + phosphate. It functions in the pathway metabolic intermediate biosynthesis; chorismate biosynthesis; chorismate from D-erythrose 4-phosphate and phosphoenolpyruvate: step 2/7. Its function is as follows. Catalyzes the conversion of 3-deoxy-D-arabino-heptulosonate 7-phosphate (DAHP) to dehydroquinate (DHQ). The sequence is that of 3-dehydroquinate synthase from Chromobacterium violaceum (strain ATCC 12472 / DSM 30191 / JCM 1249 / CCUG 213 / NBRC 12614 / NCIMB 9131 / NCTC 9757 / MK).